The following is a 547-amino-acid chain: ATP synthase subunit alpha (547 aa).

An ATP-binding site is contributed by 172 to 179; that stretch reads GDRKTGKT.

The protein belongs to the ATPase alpha/beta chains family. F-type ATPases have 2 components, CF(1) - the catalytic core - and CF(0) - the membrane proton channel. CF(1) has five subunits: alpha(3), beta(3), gamma(1), delta(1), epsilon(1). CF(0) has three main subunits: a(1), b(2) and c(9-12). The alpha and beta chains form an alternating ring which encloses part of the gamma chain. CF(1) is attached to CF(0) by a central stalk formed by the gamma and epsilon chains, while a peripheral stalk is formed by the delta and b chains.

Its subcellular location is the cell membrane. The enzyme catalyses ATP + H2O + 4 H(+)(in) = ADP + phosphate + 5 H(+)(out). In terms of biological role, produces ATP from ADP in the presence of a proton gradient across the membrane. The alpha chain is a regulatory subunit. The sequence is that of ATP synthase subunit alpha from Corynebacterium glutamicum (strain R).